The chain runs to 399 residues: LEM domain-containing protein Bocksbeutel (399 aa).

An LEM domain is found at 4-48; that stretch reads LSYLDTLGNKELLAKCLEHGLPGVPVTDSTRSVIIRRLKAKITGV. 3 disordered regions span residues 49 to 103, 119 to 141, and 233 to 287; these read PLNK…EQSR, SVQT…SYMV, and NSTS…SNLA. Polar residues-rich tracts occupy residues 68-77 and 89-99; these read HGSQVTTPTS and GRTSSNNNKIS. The segment covering 233–256 has biased composition (polar residues); it reads NSTSYEESSTYNPKLSPISPRNTF. A helical transmembrane segment spans residues 377-397; it reads FYLILVVSVMLATMVYVVLTP.

The protein resides in the nucleus inner membrane. It is found in the cytoplasm. The protein localises to the nucleus. It localises to the nucleoplasm. Its subcellular location is the endoplasmic reticulum. Its function is as follows. Inner nuclear membrane protein. May have a role in maintaining the structural integrity of the nuclear lamina. During pupal development, plays essential and redundant functions with the other LEM domain proteins; MAN1 and Ote. Also has a redundant but important role with Ote in larval development. The sequence is that of LEM domain-containing protein Bocksbeutel from Drosophila melanogaster (Fruit fly).